A 209-amino-acid chain; its full sequence is UPF0174 protein jhp_1493 (209 aa).

The protein belongs to the UPF0174 family.

The polypeptide is UPF0174 protein jhp_1493 (Helicobacter pylori (strain J99 / ATCC 700824) (Campylobacter pylori J99)).